The primary structure comprises 436 residues: 3-ketoacyl-CoA thiolase (436 aa).

The active-site Acyl-thioester intermediate is the C99. Residues H392 and C422 each act as proton acceptor in the active site.

It belongs to the thiolase-like superfamily. Thiolase family. As to quaternary structure, heterotetramer of two alpha chains (FadJ) and two beta chains (FadI).

It localises to the cytoplasm. The enzyme catalyses an acyl-CoA + acetyl-CoA = a 3-oxoacyl-CoA + CoA. Its pathway is lipid metabolism; fatty acid beta-oxidation. Its function is as follows. Catalyzes the final step of fatty acid oxidation in which acetyl-CoA is released and the CoA ester of a fatty acid two carbons shorter is formed. This Shigella dysenteriae serotype 1 (strain Sd197) protein is 3-ketoacyl-CoA thiolase.